The primary structure comprises 213 residues: Outer-membrane lipoprotein LolB (213 aa).

The first 24 residues, 1 to 24 (MNNLSYFTKTKLVWVILSLSLLSA), serve as a signal peptide directing secretion. A lipid anchor (N-palmitoyl cysteine) is attached at cysteine 25. Cysteine 25 carries the S-diacylglycerol cysteine lipid modification.

It belongs to the LolB family. In terms of assembly, monomer.

The protein resides in the cell outer membrane. Functionally, plays a critical role in the incorporation of lipoproteins in the outer membrane after they are released by the LolA protein. This Shewanella woodyi (strain ATCC 51908 / MS32) protein is Outer-membrane lipoprotein LolB.